The primary structure comprises 452 residues: Adenylyltransferase and sulfurtransferase MOCS3 (452 aa).

ATP contacts are provided by residues G99, D120, 127-131 (SNLHR), K144, and 188-189 (DN). Zn(2+)-binding residues include C230 and C233. C247 acts as the Glycyl thioester intermediate; for adenylyltransferase activity in catalysis. Zn(2+) contacts are provided by C305 and C308. Residues 354-450 (KTKAHLLLDV…WTNQVDQSFP (97 aa)) enclose the Rhodanese domain. C409 (cysteine persulfide intermediate; for sulfurtransferase activity) is an active-site residue.

This sequence in the N-terminal section; belongs to the HesA/MoeB/ThiF family. UBA4 subfamily. It depends on Zn(2+) as a cofactor.

Its subcellular location is the cytoplasm. The protein resides in the cytosol. It carries out the reaction [molybdopterin-synthase sulfur-carrier protein]-C-terminal Gly-Gly + ATP + H(+) = [molybdopterin-synthase sulfur-carrier protein]-C-terminal Gly-Gly-AMP + diphosphate. The enzyme catalyses [molybdopterin-synthase sulfur-carrier protein]-C-terminal Gly-Gly-AMP + S-sulfanyl-L-cysteinyl-[cysteine desulfurase] + AH2 = [molybdopterin-synthase sulfur-carrier protein]-C-terminal-Gly-aminoethanethioate + L-cysteinyl-[cysteine desulfurase] + A + AMP + 2 H(+). It functions in the pathway tRNA modification; 5-methoxycarbonylmethyl-2-thiouridine-tRNA biosynthesis. It participates in cofactor biosynthesis; molybdopterin biosynthesis. Its function is as follows. Plays a central role in 2-thiolation of mcm(5)S(2)U at tRNA wobble positions of cytosolic tRNA(Lys), tRNA(Glu) and tRNA(Gln). Also essential during biosynthesis of the molybdenum cofactor. Acts by mediating the C-terminal thiocarboxylation of sulfur carriers URM1 and MOCS2A. Its N-terminus first activates URM1 and MOCS2A as acyl-adenylates (-COAMP), then the persulfide sulfur on the catalytic cysteine is transferred to URM1 and MOCS2A to form thiocarboxylation (-COSH) of their C-terminus. The reaction probably involves hydrogen sulfide that is generated from the persulfide intermediate and that acts as a nucleophile towards URM1 and MOCS2A. Subsequently, a transient disulfide bond is formed. Does not use thiosulfate as sulfur donor; NFS1 probably acting as a sulfur donor for thiocarboxylation reactions. This is Adenylyltransferase and sulfurtransferase MOCS3 from Drosophila virilis (Fruit fly).